We begin with the raw amino-acid sequence, 694 residues long: DNA-binding protein RFX2 (694 aa).

Positions 174 to 249 (HLQWLLDNYE…YHYYGIRLKP (76 aa)) form a DNA-binding region, RFX-type winged-helix. 2 disordered regions span residues 268–309 (QPIH…SQHH) and 659–694 (DDVSELGSDNDGDPRISGQPPVKRERVDLNHSMQEM). A compositionally biased stretch (polar residues) spans 288 to 299 (NTANSSQHTSPE). The segment covering 300 to 309 (QSVAAQSQHH) has biased composition (low complexity).

The protein belongs to the RFX family. Homodimer. Heterodimer; heterodimerizes with other rfx proteins.

Its subcellular location is the nucleus. The protein localises to the cytoplasm. Its function is as follows. Transcription factor that acts as a key regulator of ciliogenesis. Specifically regulates expression of genes required for cilium assembly and function. Recognizes and binds the X-box, a regulatory motif with DNA sequence 5'-GTNRCC(0-3N)RGYAAC-3' present on promoters. Required for neural tube closure and neural ciliogenesis. In Xenopus tropicalis (Western clawed frog), this protein is DNA-binding protein RFX2 (rfx2).